A 488-amino-acid polypeptide reads, in one-letter code: Cobyric acid synthase (488 aa).

A GATase cobBQ-type domain is found at 248 to 441 (VLRVVVPALP…VHGLFDTPAA (194 aa)). C328 (nucleophile) is an active-site residue. H433 is a catalytic residue.

This sequence belongs to the CobB/CobQ family. CobQ subfamily.

Its pathway is cofactor biosynthesis; adenosylcobalamin biosynthesis. Catalyzes amidations at positions B, D, E, and G on adenosylcobyrinic A,C-diamide. NH(2) groups are provided by glutamine, and one molecule of ATP is hydrogenolyzed for each amidation. The polypeptide is Cobyric acid synthase (Burkholderia vietnamiensis (strain G4 / LMG 22486) (Burkholderia cepacia (strain R1808))).